The primary structure comprises 90 residues: UPF0297 protein Cthe_0151 (90 aa).

It belongs to the UPF0297 family.

In Acetivibrio thermocellus (strain ATCC 27405 / DSM 1237 / JCM 9322 / NBRC 103400 / NCIMB 10682 / NRRL B-4536 / VPI 7372) (Clostridium thermocellum), this protein is UPF0297 protein Cthe_0151.